Consider the following 432-residue polypeptide: Golgin subfamily A member 6-like protein 9 (432 aa).

Residues 1–11 (MWPQPRLPPHP) show a composition bias toward pro residues. Disordered stretches follow at residues 1 to 77 (MWPQ…YGEG) and 349 to 411 (KELE…AGGA). The segment covering 51–62 (NGSSPDTFTSGG) has biased composition (polar residues). Positions 157–354 (SKMEQLQDET…EQQVKELEKS (198 aa)) form a coiled coil. Residues 349 to 362 (KELEKSGGAEEPRG) show a composition bias toward basic and acidic residues. Residues 366-381 (AAAARPVAGAPVPQGA) show a composition bias toward low complexity.

The protein belongs to the GOLGA6 family.

The polypeptide is Golgin subfamily A member 6-like protein 9 (Homo sapiens (Human)).